Here is a 194-residue protein sequence, read N- to C-terminus: dCTP deaminase (194 aa).

Residues 110–115 (RSSLAR), D128, 136–138 (VLE), Y171, K178, and Q182 each bind dCTP. E138 functions as the Proton donor/acceptor in the catalytic mechanism. Residues 172 to 194 (NKRKSAKYRDQQEAVASRISQDK) form a disordered region.

The protein belongs to the dCTP deaminase family. In terms of assembly, homotrimer.

The catalysed reaction is dCTP + H2O + H(+) = dUTP + NH4(+). Its pathway is pyrimidine metabolism; dUMP biosynthesis; dUMP from dCTP (dUTP route): step 1/2. Functionally, catalyzes the deamination of dCTP to dUTP. The protein is dCTP deaminase of Shewanella loihica (strain ATCC BAA-1088 / PV-4).